The chain runs to 443 residues: D(2) dopamine receptor (443 aa).

Residues 1–37 (MDPLNLSWYDDDLESQNWSRPFNGSEGKPGKPHYNYY) are Extracellular-facing. N-linked (GlcNAc...) asparagine glycosylation is found at Asn-5, Asn-17, and Asn-23. Residues 38 to 60 (AMLLTLLIFIIVFGNVLVCMAVS) form a helical membrane-spanning segment. Residues 61–70 (REKALQTTTN) are Cytoplasmic-facing. The helical transmembrane segment at 71 to 93 (YLIVSLAVADLLVATLVMPWVVY) threads the bilayer. Topologically, residues 94-108 (LEVVGEWKFSRIHCD) are extracellular. A disulfide bridge links Cys-107 with Cys-182. A helical transmembrane segment spans residues 109–130 (IFVTLDVMMCTASILNLCAISI). Residues 131 to 151 (DRYTAVAMPMLYNTRYSSKRR) are Cytoplasmic-facing. Residues 152–172 (VTVMIAIVWVLSFTISCPLLF) form a helical membrane-spanning segment. The Extracellular segment spans residues 173–188 (GLNNTDQNECIIANPA). A helical transmembrane segment spans residues 189-213 (FVVYSSIVSFYVPFIVTLLVYIKIY). Residues 211-373 (KIYIVLRRRR…SQQKEKKATQ (163 aa)) form an interaction with PPP1R9B region. Residues 214-373 (IVLRRRRKRV…SQQKEKKATQ (160 aa)) lie on the Cytoplasmic side of the membrane. The tract at residues 282 to 332 (EMLSSTSPPERTRYSPIPPSHHQLTLPDPSHHGLHSTADSPAKPEKNGHAK) is disordered. Positions 323–332 (AKPEKNGHAK) are enriched in basic and acidic residues. A helical membrane pass occupies residues 374–395 (MLAIVLGVFIICWLPFFITHIL). The Extracellular portion of the chain corresponds to 396-409 (NIHCECNIPPVLYS). Cys-399 and Cys-401 are oxidised to a cystine. A helical transmembrane segment spans residues 410 to 431 (AFTWLGYVNSAVNPIIYTTFNI). Topologically, residues 432–443 (EFRKAFLKILHC) are cytoplasmic. Cys-443 is lipidated: S-palmitoyl cysteine.

Belongs to the G-protein coupled receptor 1 family. In terms of assembly, forms homo- and heterooligomers with DRD4. The interaction with DRD4 may modulate agonist-induced downstream signaling. Interacts with CADPS and CADPS2. Interacts with GPRASP1, PPP1R9B and CLIC6. Interacts with ARRB2. Interacts with HTR2A. Interacts with DRD1. Interacts with KCNA2. In terms of processing, palmitoylated. Palmitoylation which is required for proper localization to the plasma membrane and stability of the receptor could be carried on by ZDHHC4, ZDHHC3 and ZDHHC8.

It localises to the cell membrane. Its subcellular location is the golgi apparatus membrane. Functionally, dopamine receptor whose activity is mediated by G proteins which inhibit adenylyl cyclase. Positively regulates postnatal regression of retinal hyaloid vessels via suppression of VEGFR2/KDR activity, downstream of OPN5. This Canis lupus familiaris (Dog) protein is D(2) dopamine receptor (DRD2).